We begin with the raw amino-acid sequence, 520 residues long: Transactivator/viroplasmin protein (520 aa).

Residues 487 to 520 form a disordered region; that stretch reads QDASADSGPKDGPPPTRSIVEKEDVPTTSSKQVD.

The protein belongs to the caulimoviridae viroplasmin family.

It localises to the host cytoplasm. Functionally, enhances the ribosomal termination-reinitiation event leading to the translation of major open reading frames on the polycistronic viral RNAs. This chain is Transactivator/viroplasmin protein, found in Cauliflower mosaic virus (strain CM-1841) (CaMV).